The chain runs to 179 residues: tRNA-splicing endonuclease (179 aa).

Catalysis depends on residues Y115, H123, and K154.

The protein belongs to the tRNA-intron endonuclease family. Archaeal short subfamily. As to quaternary structure, homotetramer; although the tetramer contains four active sites, only two participate in the cleavage. Therefore, it should be considered as a dimer of dimers.

It catalyses the reaction pretRNA = a 3'-half-tRNA molecule with a 5'-OH end + a 5'-half-tRNA molecule with a 2',3'-cyclic phosphate end + an intron with a 2',3'-cyclic phosphate and a 5'-hydroxyl terminus.. Endonuclease that removes tRNA introns. Cleaves pre-tRNA at the 5'- and 3'-splice sites to release the intron. The products are an intron and two tRNA half-molecules bearing 2',3' cyclic phosphate and 5'-OH termini. Recognizes a pseudosymmetric substrate in which 2 bulged loops of 3 bases are separated by a stem of 4 bp. The polypeptide is tRNA-splicing endonuclease (Methanopyrus kandleri (strain AV19 / DSM 6324 / JCM 9639 / NBRC 100938)).